A 409-amino-acid chain; its full sequence is Peptide chain release factor subunit 1 (409 aa).

This sequence belongs to the eukaryotic release factor 1 family. In terms of assembly, heterodimer of two subunits, one of which binds GTP.

The protein resides in the cytoplasm. In terms of biological role, directs the termination of nascent peptide synthesis (translation) in response to the termination codons UAA, UAG and UGA. The polypeptide is Peptide chain release factor subunit 1 (Methanopyrus kandleri (strain AV19 / DSM 6324 / JCM 9639 / NBRC 100938)).